We begin with the raw amino-acid sequence, 477 residues long: Homeobox protein Meis2 (477 aa).

Residues 71 to 191 (DALKRDKDAI…KMPIDLVIDE (121 aa)) form a required for interaction with PBX1 region. One can recognise an MEIS N-terminal domain in the interval 110–193 (GGDVCSSDSF…PIDLVIDERD (84 aa)). Positions 193–203 (DGSSKSDHEEL) are enriched in basic and acidic residues. The segment at 193 to 283 (DGSSKSDHEE…KKRQKKRGIF (91 aa)) is disordered. Polar residues-rich tracts occupy residues 204–217 (SGSS…NPSS) and 239–251 (GHAS…SSEQ). Residues 276–338 (RQKKRGIFPK…NARRRIVQPM (63 aa)) constitute a DNA-binding region (homeobox; TALE-type). The segment at 299–333 (LTHPYPSEEQKKQLAQDTGLTILQVNNWFINARRR) is interaction with DNA. Residues 340-477 (DQSNRAGFLL…GGQVMDIHAQ (138 aa)) are transcriptional activation domain.

This sequence belongs to the TALE/MEIS homeobox family. As to quaternary structure, monomer and homodimer. Heterodimer with HOXB13. Isoform 2 interacts with TLX1. Isoform 3 interacts with HOXA13 and PBX1 isoform PBX1b. Isoform 4 interacts with SP1, SP3 and KLF4. Isoform 4 and isoform 5 interact with PBX1 isoform PBX1a; the interaction partially relieves MEIS2 autoinhibition. Isoform 3 also known as MEIS2b is part of a PDX1:PBX1b:Meis2B complex; Meis2B is recruited by PBX1b and can be replaced by isoform 4 in a small fraction of complexes. Can form trimeric complexes including HOXB8 and PBX2 or PBX3. Expressed in various tissues. Expressed at high level in the lymphoid organs of hematopoietic tissues. Also expressed in some regions of the brain, such as the putamen.

The protein resides in the nucleus. Its subcellular location is the cytoplasm. It is found in the perinuclear region. Involved in transcriptional regulation. Binds to HOX or PBX proteins to form dimers, or to a DNA-bound dimer of PBX and HOX proteins and thought to have a role in stabilization of the homeoprotein-DNA complex. Isoform 3 is required for the activity of a PDX1:PBX1b:MEIS2b complex in pancreatic acinar cells involved in the transcriptional activation of the ELA1 enhancer; the complex binds to the enhancer B element and cooperates with the transcription factor 1 complex (PTF1) bound to the enhancer A element; MEIS2 is not involved in complex DNA-binding. Probably in complex with PBX1, is involved in transcriptional regulation by KLF4. Isoform 3 and isoform 4 can bind to a EPHA8 promoter sequence containing the DNA motif 5'-CGGTCA-3'; in cooperation with a PBX protein (such as PBX2) is proposed to be involved in the transcriptional activation of EPHA8 in the developing midbrain. May be involved in regulation of myeloid differentiation. Can bind to the DNA sequence 5'-TGACAG-3'in the activator ACT sequence of the D(1A) dopamine receptor (DRD1) promoter and activate DRD1 transcription; isoform 5 cannot activate DRD1 transcription. This Homo sapiens (Human) protein is Homeobox protein Meis2 (MEIS2).